The following is a 167-amino-acid chain: 3-isopropylmalate dehydratase small subunit (167 aa).

This sequence belongs to the LeuD family. LeuD type 2 subfamily. In terms of assembly, heterodimer of LeuC and LeuD.

The catalysed reaction is (2R,3S)-3-isopropylmalate = (2S)-2-isopropylmalate. It functions in the pathway amino-acid biosynthesis; L-leucine biosynthesis; L-leucine from 3-methyl-2-oxobutanoate: step 2/4. Functionally, catalyzes the isomerization between 2-isopropylmalate and 3-isopropylmalate, via the formation of 2-isopropylmaleate. The sequence is that of 3-isopropylmalate dehydratase small subunit from Wolinella succinogenes (strain ATCC 29543 / DSM 1740 / CCUG 13145 / JCM 31913 / LMG 7466 / NCTC 11488 / FDC 602W) (Vibrio succinogenes).